The following is a 250-amino-acid chain: MAVTMRQMLEAGVHFGHQTRFWNPKMAPFIFGHRNKIHIINLEKTLPMYNDALKYARQLAANRGTILFVGTKRQSRDTIAEEAQRAGMPYVNARWLGGMLTNFKTLKVSIKRLKDMEAALEAGETERMSKKEALLFEREMAKLQKSIGGVKDMGGIPDAIFVVDVGYHKIAVTEANKLGIPVIAVVDTNHSPEGIDYVIPGNDDASKAVALYTAGVADAIVEGRANAVNEVVQAARGGDGDEFVEVNAEA.

It belongs to the universal ribosomal protein uS2 family.

The protein is Small ribosomal subunit protein uS2 of Paraburkholderia xenovorans (strain LB400).